The sequence spans 230 residues: Thymidylate synthase 1 (230 aa).

DUMP is bound at residue 92-93 (RR). Cys-112 functions as the Nucleophile in the catalytic mechanism. Residues 132 to 135 (RSND), Asn-143, and 173 to 175 (HVY) contribute to the dUMP site. Residue Asp-135 coordinates (6R)-5,10-methylene-5,6,7,8-tetrahydrofolate.

The protein belongs to the thymidylate synthase family. Bacterial-type ThyA subfamily. In terms of assembly, homodimer.

It is found in the cytoplasm. It carries out the reaction dUMP + (6R)-5,10-methylene-5,6,7,8-tetrahydrofolate = 7,8-dihydrofolate + dTMP. The protein operates within pyrimidine metabolism; dTTP biosynthesis. In terms of biological role, catalyzes the reductive methylation of 2'-deoxyuridine-5'-monophosphate (dUMP) to 2'-deoxythymidine-5'-monophosphate (dTMP) while utilizing 5,10-methylenetetrahydrofolate (mTHF) as the methyl donor and reductant in the reaction, yielding dihydrofolate (DHF) as a by-product. This enzymatic reaction provides an intracellular de novo source of dTMP, an essential precursor for DNA biosynthesis. The sequence is that of Thymidylate synthase 1 from Bacillus amyloliquefaciens (Bacillus velezensis).